A 149-amino-acid polypeptide reads, in one-letter code: Glutamyl-tRNA(Gln) amidotransferase subunit C, mitochondrial (149 aa).

The transit peptide at 1-25 directs the protein to the mitochondrion; it reads MNHLHRLFRITQVDRPVLLAITRRL.

Belongs to the GatC family. Subunit of the heterotrimeric GatCAB amidotransferase (AdT) complex, composed of A, B and C subunits.

It is found in the mitochondrion. The enzyme catalyses L-glutamyl-tRNA(Gln) + L-glutamine + ATP + H2O = L-glutaminyl-tRNA(Gln) + L-glutamate + ADP + phosphate + H(+). In terms of biological role, allows the formation of correctly charged Gln-tRNA(Gln) through the transamidation of misacylated Glu-tRNA(Gln) in the mitochondria. The reaction takes place in the presence of glutamine and ATP through an activated gamma-phospho-Glu-tRNA(Gln). The sequence is that of Glutamyl-tRNA(Gln) amidotransferase subunit C, mitochondrial from Branchiostoma floridae (Florida lancelet).